We begin with the raw amino-acid sequence, 258 residues long: Spindlin-2A (258 aa).

Residues 1–23 show a composition bias toward low complexity; the sequence is MKTPNAQEAEGQQTRAAAGRATG. The tract at residues 1–49 is disordered; sequence MKTPNAQEAEGQQTRAAAGRATGSANMTKKKVSQKKQRGRPSSQPRRNI. Positions 28 to 39 are enriched in basic residues; the sequence is TKKKVSQKKQRG. Tudor-like domain stretches follow at residues 50–99, 129–178, and 210–255; these read VGCR…LELH, IGKA…YQLL, and IGKH…YDLV. Histone H3K4me3 and H3R8me2a binding regions lie at residues Glu138 and 246–248; that span reads DFH.

This sequence belongs to the SPIN/STSY family. In terms of assembly, interacts with C11orf84/SPINDOC.

The protein localises to the nucleus. Functionally, may be involved in the regulation of cell cycle progression. Exhibits H3K4me3-binding activity. This chain is Spindlin-2A (SPIN2A), found in Homo sapiens (Human).